A 466-amino-acid chain; its full sequence is Asparagine--tRNA ligase (466 aa).

This sequence belongs to the class-II aminoacyl-tRNA synthetase family. As to quaternary structure, homodimer.

The protein localises to the cytoplasm. It carries out the reaction tRNA(Asn) + L-asparagine + ATP = L-asparaginyl-tRNA(Asn) + AMP + diphosphate + H(+). The sequence is that of Asparagine--tRNA ligase from Vibrio parahaemolyticus serotype O3:K6 (strain RIMD 2210633).